A 277-amino-acid polypeptide reads, in one-letter code: MWPGILVGGARVASCRYPALGPRLAAHFPAQRPPQRTLQNGLALQRCLHATATRALPLIPIVVEQTGRGERAYDIYSRLLRERIVCVMGPIDDSVASLVIAQLLFLQSESNKKPIHMYINSPGGVVTAGLAIYDTMQYILNPICTWCVGQAASMGSLLLAAGTPGMRHSLPNSRIMIHQPSGGARGQATDIAIQAEEIMKLKKQLYNIYAKHTKQSLQVIESAMERDRYMSPMEAQEFGILDKVLVHPPQDGEDEPTLVQKEPVEAAPAAEPVPAST.

The N-terminal 56 residues, 1 to 56 (MWPGILVGGARVASCRYPALGPRLAAHFPAQRPPQRTLQNGLALQRCLHATATRAL), are a transit peptide targeting the mitochondrion. Ser-153 serves as the catalytic Nucleophile. Residue His-178 is part of the active site. An N6-succinyllysine modification is found at Lys-200. Lys-211 is subject to N6-acetyllysine. The tract at residues 246 to 277 (VHPPQDGEDEPTLVQKEPVEAAPAAEPVPAST) is disordered. Positions 265-277 (EAAPAAEPVPAST) are enriched in low complexity.

The protein belongs to the peptidase S14 family. As to quaternary structure, fourteen CLPP subunits assemble into 2 heptameric rings which stack back to back to give a disk-like structure with a central cavity. Component of the ClpXP complex formed by the assembly of two CLPP heptameric rings with two CLPX hexameric rings, giving rise to a symmetrical structure with two central CLPP rings flanked by a CLPX ring at either end of the complex. Detected in liver (at protein level). Predominantly expressed in skeletal muscle. Intermediate levels in heart, liver and pancreas. Low in brain, placenta, lung and kidney.

The protein localises to the mitochondrion matrix. The enzyme catalyses Hydrolysis of proteins to small peptides in the presence of ATP and magnesium. alpha-casein is the usual test substrate. In the absence of ATP, only oligopeptides shorter than five residues are hydrolyzed (such as succinyl-Leu-Tyr-|-NHMec, and Leu-Tyr-Leu-|-Tyr-Trp, in which cleavage of the -Tyr-|-Leu- and -Tyr-|-Trp bonds also occurs).. Functionally, protease component of the ClpXP complex that cleaves peptides and various proteins in an ATP-dependent process. Has low peptidase activity in the absence of CLPX. The ClpXP complex can degrade CSN1S1, CSN2 and CSN3, as well as synthetic peptides (in vitro) and may be responsible for a fairly general and central housekeeping function rather than for the degradation of specific substrates. Cleaves PINK1 in the mitochondrion. The protein is ATP-dependent Clp protease proteolytic subunit, mitochondrial of Homo sapiens (Human).